A 33-amino-acid polypeptide reads, in one-letter code: Pardaxin P-1 (33 aa).

Belongs to the pardaxin family. In terms of assembly, in aqueous solution exists as a tetramer.

It is found in the secreted. Its subcellular location is the target cell membrane. In terms of biological role, exhibits unusual shark repellent and surfactant properties. Forms voltage-dependent, ion-permeable channels in membranes. At high concentration causes cell membrane lysis. Causes death in killfish oryzias latipes in 30 minutes at a concentration of 25 micrograms/ml. This chain is Pardaxin P-1, found in Pardachirus pavoninus (Peacock sole).